Here is a 576-residue protein sequence, read N- to C-terminus: Acyl-CoA ligase sidI (576 aa).

The PTS2-type peroxisomal targeting signal motif lies at Pro-3 to Pro-11. ATP contacts are provided by Asp-439, Arg-454, and Lys-553.

This sequence belongs to the ATP-dependent AMP-binding enzyme family.

Its subcellular location is the peroxisome. It participates in siderophore biosynthesis. Its function is as follows. Acyl-CoA ligase; part of the gene cluster that mediates the biosynthesis of at least 11 siderophores, including beauverichelin A, dimerumic acid (DA), Na-dimethyl coprogen (NADC), eleutherazine B, ferricrocin (FC), fusarinine A, fusarinine C (FsC), metachelin A, mevalonolactone, rhodotorulic acid (RA) and tenellin. This cocktail of siderophores for iron metabolism is essential for virulence, and more specifically for the fungal virulence in penetrating through the host cuticle. Siderophore synthesis is also involved in conidial germination under iron-deficient conditions. For biosynthesis of fusarinine C, the transacylase SIDF transfers anhydromevalonyl to N(5)-hydroxyornithine. The required anhydromevalonyl-CoA moiety is derived from mevalonate by CoA ligation and dehydration catalyzed by SIDI and sidH respectively. This Beauveria bassiana (strain ARSEF 2860) (White muscardine disease fungus) protein is Acyl-CoA ligase sidI.